The sequence spans 182 residues: CDP-diacylglycerol--glycerol-3-phosphate 3-phosphatidyltransferase (182 aa).

Residues 1-12 (MQLNIPTWLTLF) lie on the Cytoplasmic side of the membrane. The chain crosses the membrane as a helical span at residues 13-37 (RVVLIPFFVLAFYLPFVWAPMVCAI). The Periplasmic portion of the chain corresponds to 38 to 60 (IFVFAAATDWFDGFLARRWKQTT). Residues 61–81 (RFGAFLDPVADKVMVAVALVL) traverse the membrane as a helical segment. Over 82 to 86 (VAEHY) the chain is Cytoplasmic. Residues 87 to 107 (HSWWITLPAATMIAREIIISS) form a helical membrane-spanning segment. At 108–145 (LREWMAEIGKRSSVAVSWVGKVKTMAQMGSLVGLLWRP) the chain is on the periplasmic side. Residues 146 to 168 (DHNVELASFVLLYIAAVLTFWSM) form a helical membrane-spanning segment. Residues 169-181 (FQYLNAAWSDLLE) lie on the Cytoplasmic side of the membrane.

This sequence belongs to the CDP-alcohol phosphatidyltransferase class-I family.

The protein localises to the cell inner membrane. It catalyses the reaction a CDP-1,2-diacyl-sn-glycerol + sn-glycerol 3-phosphate = a 1,2-diacyl-sn-glycero-3-phospho-(1'-sn-glycero-3'-phosphate) + CMP + H(+). It functions in the pathway phospholipid metabolism; phosphatidylglycerol biosynthesis; phosphatidylglycerol from CDP-diacylglycerol: step 1/2. Catalyzes the conversion of cytidine diphosphate diacylglycerol (CDP-DG) and glycerol 3-phosphate into phosphatidylglycerol. Essential for the synthesis of anionic phospholipids, thereby playing a role in balancing the ratio of zwitterionic and anionic phospholipids, which is thought to be important for normal membrane function. The chain is CDP-diacylglycerol--glycerol-3-phosphate 3-phosphatidyltransferase from Yersinia pestis bv. Antiqua (strain Antiqua).